The following is a 299-amino-acid chain: Bifunctional protein FolD (299 aa).

Residues 168-170, serine 193, and isoleucine 234 contribute to the NADP(+) site; that span reads GRS.

The protein belongs to the tetrahydrofolate dehydrogenase/cyclohydrolase family. In terms of assembly, homodimer.

It carries out the reaction (6R)-5,10-methylene-5,6,7,8-tetrahydrofolate + NADP(+) = (6R)-5,10-methenyltetrahydrofolate + NADPH. The catalysed reaction is (6R)-5,10-methenyltetrahydrofolate + H2O = (6R)-10-formyltetrahydrofolate + H(+). The protein operates within one-carbon metabolism; tetrahydrofolate interconversion. Its function is as follows. Catalyzes the oxidation of 5,10-methylenetetrahydrofolate to 5,10-methenyltetrahydrofolate and then the hydrolysis of 5,10-methenyltetrahydrofolate to 10-formyltetrahydrofolate. This Bartonella tribocorum (strain CIP 105476 / IBS 506) protein is Bifunctional protein FolD.